We begin with the raw amino-acid sequence, 117 residues long: Large ribosomal subunit protein uL18 (117 aa).

This sequence belongs to the universal ribosomal protein uL18 family. In terms of assembly, part of the 50S ribosomal subunit; part of the 5S rRNA/L5/L18/L25 subcomplex. Contacts the 5S and 23S rRNAs.

Its function is as follows. This is one of the proteins that bind and probably mediate the attachment of the 5S RNA into the large ribosomal subunit, where it forms part of the central protuberance. This chain is Large ribosomal subunit protein uL18, found in Polynucleobacter asymbioticus (strain DSM 18221 / CIP 109841 / QLW-P1DMWA-1) (Polynucleobacter necessarius subsp. asymbioticus).